The primary structure comprises 122 residues: Large ribosomal subunit protein uL14 (122 aa).

The protein belongs to the universal ribosomal protein uL14 family. As to quaternary structure, part of the 50S ribosomal subunit. Forms a cluster with proteins L3 and L19. In the 70S ribosome, L14 and L19 interact and together make contacts with the 16S rRNA in bridges B5 and B8.

Functionally, binds to 23S rRNA. Forms part of two intersubunit bridges in the 70S ribosome. The polypeptide is Large ribosomal subunit protein uL14 (Rickettsia felis (strain ATCC VR-1525 / URRWXCal2) (Rickettsia azadi)).